Consider the following 271-residue polypeptide: Insulin-like growth factor-binding protein 5 (271 aa).

The first 19 residues, 1–19 (MVISVVLLLLAACAVPAQG), serve as a signal peptide directing secretion. Residues 22-102 (SFVHCEPCDE…LHGRGVCLNE (81 aa)) form the IGFBP N-terminal domain. Disulfide bonds link cysteine 26–cysteine 52, cysteine 29–cysteine 54, cysteine 37–cysteine 55, cysteine 44–cysteine 58, cysteine 66–cysteine 79, and cysteine 73–cysteine 99. Residues 109 to 121 (TKIERDSREHEEP) are compositionally biased toward basic and acidic residues. The tract at residues 109 to 129 (TKIERDSREHEEPTTSEMAEE) is disordered. A Phosphoserine modification is found at serine 115. The Thyroglobulin type-1 domain maps to 188 to 262 (QGPCRRHMEA…MEYVDGDFQC (75 aa)). Intrachain disulfides connect cysteine 191–cysteine 218, cysteine 229–cysteine 240, and cysteine 242–cysteine 262.

Interacts with IGF1; this interaction enhances the growth stimulatory effects of IGF1 on fibroblasts. Interacts with CAV1; this interaction allows trafficking of IGFBP5 from the plasma membrane to the nucleus. Interacts with NCL; this interaction is necessary for IGFBP5 localization to the nucleus. Mostly in kidney.

The protein localises to the secreted. The protein resides in the cytoplasm. It localises to the nucleus. Multifunctional protein that plays a critical role in regulating the availability of IGFs to their receptors and thereby regulates IGF-mediated cellular processes including proliferation, differentiation, and apoptosis in a cell-type specific manner. Increases the cell proliferation of osteoblasts, intestinal smooth muscle cells and neuroblastoma cells. Enhances adhesion and survival of epithelial cells but decreases adhesion of mesenchymal cells. Once secreted, acts as a major mediator of mTORC1-dependent feedback inhibition of IGF1 signaling. Also plays a role in the induction of extracellular matrix (ECM) production and deposition independently of its nuclear translocation and binding to IGFs. Acts itself as a growth factor that can act independently of IGFs to regulate bone formation. Acts as a ligand for the ROR1 receptor which triggers formation of ROR1/HER2 heterodimer to enhance CREB oncogenic signaling. The sequence is that of Insulin-like growth factor-binding protein 5 (Igfbp5) from Rattus norvegicus (Rat).